Here is a 634-residue protein sequence, read N- to C-terminus: tRNA uridine 5-carboxymethylaminomethyl modification enzyme MnmG (634 aa).

Residue 14–19 (GGGHAG) coordinates FAD. 279-293 (GPRYCPSIEDKVVRF) is an NAD(+) binding site.

It belongs to the MnmG family. Homodimer. Heterotetramer of two MnmE and two MnmG subunits. It depends on FAD as a cofactor.

The protein localises to the cytoplasm. Functionally, NAD-binding protein involved in the addition of a carboxymethylaminomethyl (cmnm) group at the wobble position (U34) of certain tRNAs, forming tRNA-cmnm(5)s(2)U34. This Xanthomonas axonopodis pv. citri (strain 306) protein is tRNA uridine 5-carboxymethylaminomethyl modification enzyme MnmG.